Here is a 291-residue protein sequence, read N- to C-terminus: Beta-lactamase Toho-1 (291 aa).

Residues 1–29 (MMTQSIRRSMLTVMATLPLLFSSATLHAQ) form the signal peptide. Ser73 serves as the catalytic Acyl-ester intermediate. A substrate-binding site is contributed by 237-239 (KTG).

This sequence belongs to the class-A beta-lactamase family. In terms of assembly, monomer.

The enzyme catalyses a beta-lactam + H2O = a substituted beta-amino acid. Its function is as follows. Has strong cefotaxime-hydrolyzing activity. This is Beta-lactamase Toho-1 (bla) from Escherichia coli.